Here is a 304-residue protein sequence, read N- to C-terminus: MTAVFPAADSVIEAACAKVNLTLHVTGRRANGYHDLDSLVVFSGAHDTLIACPAEGLSLAMTGPTAALLDAEDDNIILRAARRLAERAGHRPDARLTLIKRLPVAAGIGGGSADGAATLRALSRLWKIALPQAEMLTLAAELGADVPVCLVGKAVTMAGIGDHLTPAPPLPEAWLLLVNPRRAVPTPQVFKARQGGFSAANPLTESPASAQALAEALKRRTNDLAEPARRIEPVIDEVLRTLAALPGCLLARMSGSGATCFGLFADQTSADFGMASLRETHGSWWASADRLIGDTARVPAALAV.

Residue K18 is part of the active site. 103–113 (PVAAGIGGGSA) provides a ligand contact to ATP. D145 is an active-site residue.

It belongs to the GHMP kinase family. IspE subfamily.

It carries out the reaction 4-CDP-2-C-methyl-D-erythritol + ATP = 4-CDP-2-C-methyl-D-erythritol 2-phosphate + ADP + H(+). The protein operates within isoprenoid biosynthesis; isopentenyl diphosphate biosynthesis via DXP pathway; isopentenyl diphosphate from 1-deoxy-D-xylulose 5-phosphate: step 3/6. Functionally, catalyzes the phosphorylation of the position 2 hydroxy group of 4-diphosphocytidyl-2C-methyl-D-erythritol. The polypeptide is 4-diphosphocytidyl-2-C-methyl-D-erythritol kinase (Rhodospirillum rubrum (strain ATCC 11170 / ATH 1.1.1 / DSM 467 / LMG 4362 / NCIMB 8255 / S1)).